Consider the following 115-residue polypeptide: MSKINDINDLVNATFQVKKFFRDTKKKFNLNYEEIYILNHILRSESNEISSKEIAKCSEFKPYYLTKALQKLKDLKLLSKKRSLQDERTVIVYVTDTQKANIQKLISELEEYIKN.

A DNA-binding region (H-T-H motif) is located at residues 51 to 74; the sequence is SKEIAKCSEFKPYYLTKALQKLKD.

This sequence belongs to the SarA family. As to quaternary structure, homodimer.

It is found in the cytoplasm. Its function is as follows. Negative regulator of sarA transcription at late exponential and stationary growth phases. It contributes to the modulation of target genes downstream of the sarA regulatory cascade. Also, positively regulates expression of primary transcripts RNAII and RNAIII generated by agr (virulence accessory gene regulator) locus. The protein is HTH-type transcriptional regulator SarR (sarR) of Staphylococcus aureus (strain NCTC 8325 / PS 47).